The sequence spans 373 residues: 4-hydroxy-3-methylbut-2-en-1-yl diphosphate synthase (flavodoxin) (373 aa).

[4Fe-4S] cluster is bound by residues Cys-270, Cys-273, Cys-305, and Glu-312.

It belongs to the IspG family. [4Fe-4S] cluster serves as cofactor.

It carries out the reaction (2E)-4-hydroxy-3-methylbut-2-enyl diphosphate + oxidized [flavodoxin] + H2O + 2 H(+) = 2-C-methyl-D-erythritol 2,4-cyclic diphosphate + reduced [flavodoxin]. It functions in the pathway isoprenoid biosynthesis; isopentenyl diphosphate biosynthesis via DXP pathway; isopentenyl diphosphate from 1-deoxy-D-xylulose 5-phosphate: step 5/6. Functionally, converts 2C-methyl-D-erythritol 2,4-cyclodiphosphate (ME-2,4cPP) into 1-hydroxy-2-methyl-2-(E)-butenyl 4-diphosphate. The chain is 4-hydroxy-3-methylbut-2-en-1-yl diphosphate synthase (flavodoxin) from Proteus mirabilis (strain HI4320).